We begin with the raw amino-acid sequence, 660 residues long: Anoctamin-10 (660 aa).

Residues 1–207 (MKVTLSALDT…DSIRGYFGET (207 aa)) lie on the Cytoplasmic side of the membrane. Residues 208-228 (IALYFGFLEYFTFALIPMAVI) traverse the membrane as a helical segment. Over 229–240 (GLPYYLFVWEDY) the chain is Extracellular. A helical membrane pass occupies residues 241–261 (DKYVIFASFNLIWSTVILELW). Topologically, residues 262 to 316 (KRGCANMTYRWGTLLMKRKFEEPRPGFHGVLGINSITGKEEPLYPSYKRQLRIYL) are cytoplasmic. Residues 317–337 (VSLPFVCLCLYFSLYVMMIYF) form a helical membrane-spanning segment. At 338-352 (DMEVWALGLHENSGS) the chain is on the extracellular side. A helical transmembrane segment spans residues 353–373 (EWTSVLLYVPSIIYAIVIEIM). The Cytoplasmic segment spans residues 374-400 (NRLYRYAAEFLTSWENHRLESAYQNHL). The chain crosses the membrane as a helical span at residues 401–421 (ILKVLVFNFLNCFASLFYIAF). Over 422–500 (VLKDMKLLRQ…YLGTFDDYLE (79 aa)) the chain is Extracellular. A helical transmembrane segment spans residues 501–521 (LFLQFGYVSLFSCVYPLAAAF). Topologically, residues 522-553 (AVLNNFTEVNSDALKMCRVFKRPFSEPSANIG) are cytoplasmic. Residues 554-574 (VWQLAFETMSVISVVTNCALI) form a helical membrane-spanning segment. The Extracellular portion of the chain corresponds to 575–590 (GMSPQVNAVFPESKAD). Residues 591–611 (LILIVVAVEHALLALKFILAF) form a helical membrane-spanning segment. Topologically, residues 612–660 (AIPDKPRHIQMKLARLEFESLEALKQQQMKLVTENLKEEPMESGKEKAT) are cytoplasmic.

This sequence belongs to the anoctamin family. In terms of tissue distribution, highly expressed in the brain. Intermediate levels in the retina and heart and low levels in the placenta, liver, lung, duodenum, kidney, testis and spleen. In brain areas, highest expression in the frontal and occipital cortices and in the cerebellum. Lower expression in the fetal brain than in the adult brain.

Its subcellular location is the cell membrane. Functionally, does not exhibit calcium-activated chloride channel (CaCC) activity. Can inhibit the activity of ANO1. The chain is Anoctamin-10 (ANO10) from Homo sapiens (Human).